The following is a 710-amino-acid chain: Integrator complex subunit 10 (710 aa).

Residues 366 to 393 form a disordered region; that stretch reads IHKKRKLAEGREKTMSSDDEDPSGKARS. Residues 372–381 show a composition bias toward basic and acidic residues; it reads LAEGREKTMS.

This sequence belongs to the Integrator subunit 10 family. Component of the Integrator complex, composed of core subunits INTS1, INTS2, INTS3, INTS4, INTS5, INTS6, INTS7, INTS8, INTS9/RC74, INTS10, INTS11/CPSF3L, INTS12, INTS13, INTS14 and INTS15. The core complex associates with protein phosphatase 2A subunits PPP2CA and PPP2R1A, to form the Integrator-PP2A (INTAC) complex. INTS10 is part of the tail subcomplex, composed of INTS10, INTS13, INTS14 and INTS15.

The protein localises to the nucleus. Its function is as follows. Component of the integrator complex, a multiprotein complex that terminates RNA polymerase II (Pol II) transcription in the promoter-proximal region of genes. The integrator complex provides a quality checkpoint during transcription elongation by driving premature transcription termination of transcripts that are unfavorably configured for transcriptional elongation: the complex terminates transcription by (1) catalyzing dephosphorylation of the C-terminal domain (CTD) of Pol II subunit POLR2A/RPB1 and SUPT5H/SPT5, (2) degrading the exiting nascent RNA transcript via endonuclease activity and (3) promoting the release of Pol II from bound DNA. The integrator complex is also involved in terminating the synthesis of non-coding Pol II transcripts, such as enhancer RNAs (eRNAs), small nuclear RNAs (snRNAs), telomerase RNAs and long non-coding RNAs (lncRNAs). This is Integrator complex subunit 10 (INTS10) from Gallus gallus (Chicken).